The following is a 195-amino-acid chain: Imidazoleglycerol-phosphate dehydratase (195 aa).

It belongs to the imidazoleglycerol-phosphate dehydratase family.

It localises to the cytoplasm. It catalyses the reaction D-erythro-1-(imidazol-4-yl)glycerol 3-phosphate = 3-(imidazol-4-yl)-2-oxopropyl phosphate + H2O. It participates in amino-acid biosynthesis; L-histidine biosynthesis; L-histidine from 5-phospho-alpha-D-ribose 1-diphosphate: step 6/9. The polypeptide is Imidazoleglycerol-phosphate dehydratase (Methylorubrum populi (strain ATCC BAA-705 / NCIMB 13946 / BJ001) (Methylobacterium populi)).